A 296-amino-acid polypeptide reads, in one-letter code: tRNA (guanine(9)-N1)-methyltransferase (296 aa).

Residues 1–33 (MTPETNNDETLSRPKPRAALPPVPEGMSKSQWK) are disordered. In terms of domain architecture, SAM-dependent MTase TRM10-type spans 85–274 (TPRVNVNQKD…SVLPARKLAE (190 aa)). Residues 181–182 (LT), Gly-201, 205–209 (DKNRH), Cys-213, Leu-227, and 239–241 (KVL) each bind S-adenosyl-L-methionine. The Proton acceptor role is filled by Asp-205. Positions 277-296 (DHAQESNSSSPAEEQDAQDI) are disordered.

The protein belongs to the class IV-like SAM-binding methyltransferase superfamily. TRM10 family. In terms of assembly, monomer.

It localises to the cytoplasm. Its subcellular location is the nucleus. The enzyme catalyses guanosine(9) in tRNA + S-adenosyl-L-methionine = N(1)-methylguanosine(9) in tRNA + S-adenosyl-L-homocysteine + H(+). In terms of biological role, S-adenosyl-L-methionine-dependent guanine N(1)-methyltransferase that catalyzes the formation of N(1)-methylguanine at position 9 (m1G9) in cytoplasmic tRNA. The chain is tRNA (guanine(9)-N1)-methyltransferase from Eremothecium gossypii (strain ATCC 10895 / CBS 109.51 / FGSC 9923 / NRRL Y-1056) (Yeast).